The sequence spans 747 residues: Zinc finger and BTB domain-containing protein 47 (747 aa).

Positions 15 to 83 constitute a BTB domain; the sequence is CDVDLVLVPQ…IYTSKLLVNA (69 aa). Lys190 is covalently cross-linked (Glycyl lysine isopeptide (Lys-Gly) (interchain with G-Cter in SUMO2)). Residues 243–424 are disordered; it reads QTLHVSTGPE…ARGPPATDGL (182 aa). Residues 267-277 show a composition bias toward basic and acidic residues; sequence GREDGLQRHSD. Over residues 278–354 the composition is skewed to acidic residues; that stretch reads EEEEDDEEEE…SEEEEGEEGE (77 aa). Basic and acidic residues predominate over residues 380-398; that stretch reads RSRENARRRGTPEPEEAGR. The C2H2-type 1 zinc-finger motif lies at 436 to 459; that stretch reads HPCQKCPRVFNNRWYLEKHMNVTH. A C2H2-type 2; degenerate zinc finger spans residues 463 to 485; it reads QICDQCGKRFLLESELLLHRQTD. 7 C2H2-type zinc fingers span residues 490–513, 520–542, 548–570, 576–598, 604–626, 632–654, and 660–687; these read IQCVTCGKAFKKLWSLHEHNKIVH, FSCEICEKKFYTMAHVRKHMVAH, FTCETCGKSFKRSMSLKVHSLQH, FRCENCNERFQYKYQLRSHMSIH, FMCQWCGKDFNMKQYFDEHMKTH, YICEICGKSFTSRPNMKRHRRTH, and YPCDVCGQRFRFSNMLKAHKEKCFRVSH. A disordered region spans residues 694-747; it reads VPAAPGLPPTQPQAHALPLLPGLPQTLPPPPHLPPPPPLFPTTASPGGRMNANN. Pro residues predominate over residues 719 to 733; that stretch reads TLPPPPHLPPPPPLF.

Belongs to the krueppel C2H2-type zinc-finger protein family.

The protein resides in the nucleus. Its function is as follows. May be involved in transcriptional regulation. The protein is Zinc finger and BTB domain-containing protein 47 (ZBTB47) of Homo sapiens (Human).